Here is a 178-residue protein sequence, read N- to C-terminus: 2-C-methyl-D-erythritol 2,4-cyclodiphosphate synthase (178 aa).

Asp24, His26, and His61 together coordinate a divalent metal cation. Residue 24-26 (DSH) coordinates 4-CDP-2-C-methyl-D-erythritol 2-phosphate. 4-CDP-2-C-methyl-D-erythritol 2-phosphate is bound at residue 150–153 (TSGE).

It belongs to the IspF family. In terms of assembly, homotrimer. The cofactor is a divalent metal cation.

The catalysed reaction is 4-CDP-2-C-methyl-D-erythritol 2-phosphate = 2-C-methyl-D-erythritol 2,4-cyclic diphosphate + CMP. It functions in the pathway isoprenoid biosynthesis; isopentenyl diphosphate biosynthesis via DXP pathway; isopentenyl diphosphate from 1-deoxy-D-xylulose 5-phosphate: step 4/6. In terms of biological role, involved in the biosynthesis of isopentenyl diphosphate (IPP) and dimethylallyl diphosphate (DMAPP), two major building blocks of isoprenoid compounds. Catalyzes the conversion of 4-diphosphocytidyl-2-C-methyl-D-erythritol 2-phosphate (CDP-ME2P) to 2-C-methyl-D-erythritol 2,4-cyclodiphosphate (ME-CPP) with a corresponding release of cytidine 5-monophosphate (CMP). In Chlamydia trachomatis serovar L2b (strain UCH-1/proctitis), this protein is 2-C-methyl-D-erythritol 2,4-cyclodiphosphate synthase.